A 183-amino-acid chain; its full sequence is ATP synthase subunit b, chloroplastic (183 aa).

Residues 25-45 (DILATNLINLTVVVGVLIFFG) form a helical membrane-spanning segment.

This sequence belongs to the ATPase B chain family. F-type ATPases have 2 components, F(1) - the catalytic core - and F(0) - the membrane proton channel. F(1) has five subunits: alpha(3), beta(3), gamma(1), delta(1), epsilon(1). F(0) has four main subunits: a(1), b(1), b'(1) and c(10-14). The alpha and beta chains form an alternating ring which encloses part of the gamma chain. F(1) is attached to F(0) by a central stalk formed by the gamma and epsilon chains, while a peripheral stalk is formed by the delta, b and b' chains.

It is found in the plastid. Its subcellular location is the chloroplast thylakoid membrane. In terms of biological role, f(1)F(0) ATP synthase produces ATP from ADP in the presence of a proton or sodium gradient. F-type ATPases consist of two structural domains, F(1) containing the extramembraneous catalytic core and F(0) containing the membrane proton channel, linked together by a central stalk and a peripheral stalk. During catalysis, ATP synthesis in the catalytic domain of F(1) is coupled via a rotary mechanism of the central stalk subunits to proton translocation. Component of the F(0) channel, it forms part of the peripheral stalk, linking F(1) to F(0). In Saccharum hybrid (Sugarcane), this protein is ATP synthase subunit b, chloroplastic.